The sequence spans 324 residues: Acetyl-coenzyme A carboxylase carboxyl transferase subunit alpha (324 aa).

A CoA carboxyltransferase C-terminal domain is found at 37 to 291 (KLERRLDKLK…RDFILREWLR (255 aa)).

It belongs to the AccA family. As to quaternary structure, acetyl-CoA carboxylase is a heterohexamer composed of biotin carboxyl carrier protein (AccB), biotin carboxylase (AccC) and two subunits each of ACCase subunit alpha (AccA) and ACCase subunit beta (AccD).

It localises to the cytoplasm. It catalyses the reaction N(6)-carboxybiotinyl-L-lysyl-[protein] + acetyl-CoA = N(6)-biotinyl-L-lysyl-[protein] + malonyl-CoA. It functions in the pathway lipid metabolism; malonyl-CoA biosynthesis; malonyl-CoA from acetyl-CoA: step 1/1. Functionally, component of the acetyl coenzyme A carboxylase (ACC) complex. First, biotin carboxylase catalyzes the carboxylation of biotin on its carrier protein (BCCP) and then the CO(2) group is transferred by the carboxyltransferase to acetyl-CoA to form malonyl-CoA. The chain is Acetyl-coenzyme A carboxylase carboxyl transferase subunit alpha from Chlamydia abortus (strain DSM 27085 / S26/3) (Chlamydophila abortus).